Reading from the N-terminus, the 193-residue chain is dCTP deaminase (193 aa).

Residues 110–115 (RSSLAR), D128, 136–138 (VLE), Y171, K178, and Q182 contribute to the dCTP site. The active-site Proton donor/acceptor is E138. The tract at residues 170-193 (PYNSRQDAKYRGQQGAVASRIDKD) is disordered.

It belongs to the dCTP deaminase family. In terms of assembly, homotrimer.

The enzyme catalyses dCTP + H2O + H(+) = dUTP + NH4(+). Its pathway is pyrimidine metabolism; dUMP biosynthesis; dUMP from dCTP (dUTP route): step 1/2. Catalyzes the deamination of dCTP to dUTP. This chain is dCTP deaminase, found in Yersinia enterocolitica serotype O:8 / biotype 1B (strain NCTC 13174 / 8081).